The primary structure comprises 353 residues: sn-glycerol-3-phosphate import ATP-binding protein UgpC (353 aa).

The ABC transporter domain occupies 4–234 (ILLNDVRKSY…PASEFVAGFI (231 aa)). 36–43 (GPSGCGKS) lines the ATP pocket.

The protein belongs to the ABC transporter superfamily. sn-glycerol-3-phosphate importer (TC 3.A.1.1.3) family. In terms of assembly, the complex is composed of two ATP-binding proteins (UgpC), two transmembrane proteins (UgpA and UgpE) and a solute-binding protein (UgpB).

It is found in the cell inner membrane. The enzyme catalyses sn-glycerol 3-phosphate(out) + ATP + H2O = sn-glycerol 3-phosphate(in) + ADP + phosphate + H(+). In terms of biological role, part of the ABC transporter complex UgpBAEC involved in sn-glycerol-3-phosphate (G3P) import. Responsible for energy coupling to the transport system. In Paracoccus denitrificans (strain Pd 1222), this protein is sn-glycerol-3-phosphate import ATP-binding protein UgpC.